Consider the following 303-residue polypeptide: 1-acyl-sn-glycerol-3-phosphate acyltransferase (303 aa).

The HXXXXD motif motif lies at 82–87 (HQSTLD). Residues 278-303 (NEPVPSVSISNDVNTHNEGSSVKKMH) form a disordered region. Positions 284-297 (VSISNDVNTHNEGS) are enriched in polar residues.

The protein belongs to the 1-acyl-sn-glycerol-3-phosphate acyltransferase family.

The protein localises to the lipid droplet. The enzyme catalyses a 1-acyl-sn-glycero-3-phosphate + an acyl-CoA = a 1,2-diacyl-sn-glycero-3-phosphate + CoA. It catalyses the reaction a 1-acyl-sn-glycero-3-phosphocholine + an acyl-CoA = a 1,2-diacyl-sn-glycero-3-phosphocholine + CoA. The catalysed reaction is a 1-acyl-sn-glycero-3-phosphoethanolamine + an acyl-CoA = a 1,2-diacyl-sn-glycero-3-phosphoethanolamine + CoA. It carries out the reaction 1-hexadecanoyl-sn-glycero-3-phosphate + (9Z)-octadecenoyl-CoA = 1-hexadecanoyl-2-(9Z-octadecenoyl)-sn-glycero-3-phosphate + CoA. The enzyme catalyses 1-octadecanoyl-sn-glycero-3-phosphate + (9Z)-octadecenoyl-CoA = 1-octadecanoyl-2-(9Z-octadecenoyl)-sn-glycero-3-phosphate + CoA. It catalyses the reaction 1-(9Z-octadecenoyl)-sn-glycero-3-phospho-L-serine + (9Z)-octadecenoyl-CoA = 1,2-di-(9Z)-octadecenoyl-sn-glycero-3-phospho-L-serine + CoA. The catalysed reaction is a 1-acyl-sn-glycero-3-phospho-(1D-myo-inositol) + (9Z)-octadecenoyl-CoA = a 1-acyl-2-(9Z-octadecenoyl)-sn-glycero-3-phospho-(1D-myo-inositol) + CoA. It carries out the reaction 1-heptadecanoyl-sn-glycero-3-phosphate + (9Z)-octadecenoyl-CoA = 1-heptadecanoyl-2-(9Z)-octadecenoyl-sn-glycero-3-phosphate + CoA. The enzyme catalyses 1-heptadecanoyl-sn-glycero-3-phosphate + dodecanoyl-CoA = 1-heptadecanoyl-2-dodecanoyl-sn-glycero-3-phosphate + CoA. It catalyses the reaction 1-heptadecanoyl-sn-glycero-3-phosphate + tetradecanoyl-CoA = 1-heptadecanoyl-2-tetradecanoyl-sn-glycero-3-phosphate + CoA. Its pathway is phospholipid metabolism; CDP-diacylglycerol biosynthesis; CDP-diacylglycerol from sn-glycerol 3-phosphate: step 2/3. Its function is as follows. Acyltransferase that catalyzes the sn-2-specific, acyl-CoA-dependent acylation of lysophosphatidic acid (LPA) to phosphatidic acid (PA) in lipid particles. Together with ALE1, plays a central role in PA biosynthesis. PA is the intermediate, from which all glycerophospholipids are synthesized. Can also acylate lysophosphoinositol (LPI) and lysophosphoserine (LPS). The fatty acyl substrates include 18:1-acyl-CoA, 14:0-acyl-CoA, 12:0-acyl-CoA and 10:0-acyl-CoA. The protein is 1-acyl-sn-glycerol-3-phosphate acyltransferase of Saccharomyces cerevisiae (strain ATCC 204508 / S288c) (Baker's yeast).